Here is a 329-residue protein sequence, read N- to C-terminus: Serpentine receptor class alpha-7 (329 aa).

7 consecutive transmembrane segments (helical) span residues 25–45, 57–77, 104–124, 143–163, 187–207, 237–257, and 273–293; these read YVYL…VKIV, ILLF…LFSA, YLKV…GLLL, VGIA…KIII, RLFA…SVLL, TICF…FGIF, and FIVV…ILLV.

This sequence belongs to the nematode receptor-like protein sra family.

Its subcellular location is the membrane. This chain is Serpentine receptor class alpha-7 (sra-7), found in Caenorhabditis elegans.